Reading from the N-terminus, the 390-residue chain is 3,5-dihydroxyphenylacetyl-CoA synthase (390 aa).

Cys-173 is a catalytic residue.

The protein belongs to the thiolase-like superfamily. Chalcone/stilbene synthases family.

It carries out the reaction 4 malonyl-CoA + 4 H(+) = (3,5-dihydroxyphenyl)acetyl-CoA + 4 CO2 + 3 CoA + H2O. It participates in antibiotic biosynthesis; vancomycin biosynthesis. Its function is as follows. Involved in the biosynthesis of the nonproteinogenic amino acid monomer (S)-3,5-dihydroxyphenylglycine (Dpg) responsible of the production of vancomycin and teicoplanin antibiotics. Catalyzes the Claisen condensation of four molecules of malonyl-CoA to yield 3,5-dihydroxyphenylacetyl-CoA (DPA-CoA) and three free coenzyme A (CoA). DpgA requires the presence of the dehydratases DpgB and DpgD to facilitate the aromatization of the DPA-S-DgpA or DPA-S-CoA intermediate. The protein is 3,5-dihydroxyphenylacetyl-CoA synthase of Streptomyces toyocaensis.